The following is a 209-amino-acid chain: Uracil phosphoribosyltransferase (209 aa).

5-phospho-alpha-D-ribose 1-diphosphate is bound by residues Arg-79, Arg-104, and 131–139 (DPMLATGGS). Residues Ile-194 and 199–201 (GDA) contribute to the uracil site. Asp-200 is a binding site for 5-phospho-alpha-D-ribose 1-diphosphate.

This sequence belongs to the UPRTase family. Mg(2+) is required as a cofactor.

The catalysed reaction is UMP + diphosphate = 5-phospho-alpha-D-ribose 1-diphosphate + uracil. The protein operates within pyrimidine metabolism; UMP biosynthesis via salvage pathway; UMP from uracil: step 1/1. Its activity is regulated as follows. Allosterically activated by GTP. Its function is as follows. Catalyzes the conversion of uracil and 5-phospho-alpha-D-ribose 1-diphosphate (PRPP) to UMP and diphosphate. The sequence is that of Uracil phosphoribosyltransferase from Clostridium perfringens (strain SM101 / Type A).